Here is a 314-residue protein sequence, read N- to C-terminus: Ribosomal protein L11 methyltransferase (314 aa).

Thr161, Gly182, Asp204, and Asn248 together coordinate S-adenosyl-L-methionine.

It belongs to the methyltransferase superfamily. PrmA family.

It is found in the cytoplasm. It catalyses the reaction L-lysyl-[protein] + 3 S-adenosyl-L-methionine = N(6),N(6),N(6)-trimethyl-L-lysyl-[protein] + 3 S-adenosyl-L-homocysteine + 3 H(+). Functionally, methylates ribosomal protein L11. The chain is Ribosomal protein L11 methyltransferase from Listeria welshimeri serovar 6b (strain ATCC 35897 / DSM 20650 / CCUG 15529 / CIP 8149 / NCTC 11857 / SLCC 5334 / V8).